The chain runs to 83 residues: Putative membrane protein insertion efficiency factor (83 aa).

The protein belongs to the UPF0161 family.

The protein resides in the cell membrane. In terms of biological role, could be involved in insertion of integral membrane proteins into the membrane. The protein is Putative membrane protein insertion efficiency factor of Staphylococcus saprophyticus subsp. saprophyticus (strain ATCC 15305 / DSM 20229 / NCIMB 8711 / NCTC 7292 / S-41).